The primary structure comprises 268 residues: Tryptophan synthase alpha chain (268 aa).

Catalysis depends on proton acceptor residues glutamate 49 and aspartate 60.

It belongs to the TrpA family. In terms of assembly, tetramer of two alpha and two beta chains.

It catalyses the reaction (1S,2R)-1-C-(indol-3-yl)glycerol 3-phosphate + L-serine = D-glyceraldehyde 3-phosphate + L-tryptophan + H2O. It participates in amino-acid biosynthesis; L-tryptophan biosynthesis; L-tryptophan from chorismate: step 5/5. Its function is as follows. The alpha subunit is responsible for the aldol cleavage of indoleglycerol phosphate to indole and glyceraldehyde 3-phosphate. The protein is Tryptophan synthase alpha chain of Pseudomonas aeruginosa (strain UCBPP-PA14).